Here is a 561-residue protein sequence, read N- to C-terminus: DNA ligase B (561 aa).

The active-site N6-AMP-lysine intermediate is the Lys-125.

It belongs to the NAD-dependent DNA ligase family. LigB subfamily.

The enzyme catalyses NAD(+) + (deoxyribonucleotide)n-3'-hydroxyl + 5'-phospho-(deoxyribonucleotide)m = (deoxyribonucleotide)n+m + AMP + beta-nicotinamide D-nucleotide.. Catalyzes the formation of phosphodiester linkages between 5'-phosphoryl and 3'-hydroxyl groups in double-stranded DNA using NAD as a coenzyme and as the energy source for the reaction. The polypeptide is DNA ligase B (Salmonella paratyphi B (strain ATCC BAA-1250 / SPB7)).